The sequence spans 390 residues: METFLFTSESVNEGHPDKLCDQVSDAILDACLEQDPESKVACETCTKTNMVMVFGEITTSAKVDYEKIVRSTCREIGFISADVGLDADKCNVLVNIEQQSPDIAQGVHGHLTKKPEDIGAGDQGHMFGYATDETPELMPLTHVLATKLGAKLTEVRKNKTCPWLRPDGKTQVTVEYKNEGGAMIPIRVHTVLISTQHDETVTNDEIAVDLKEHVIKPVIPAKYLDENTIFHLNPSGRFVIGGPHGDAGLTGRKIIIDTYGGWGAHGGGAFSGKDPTKVDRSGAYIVRQAAKSVVATGLARRCIVQVSYAIGVPEPLSVFVDTYKTGTIPDKDILVLIKEAFDFRPGMMAINLDLKRGGNFRFQKTAAYGHFGRDDPDFTWEVIKPLKPKA.

Glutamate 9 contributes to the Mg(2+) binding site. Histidine 15 contacts ATP. A K(+)-binding site is contributed by glutamate 43. L-methionine contacts are provided by glutamate 56 and glutamine 99. Residues 167 to 169, 235 to 238, aspartate 246, 252 to 253, alanine 269, lysine 273, and lysine 277 contribute to the ATP site; these read DGK, SGRF, and RK. Aspartate 246 contacts L-methionine. Lysine 277 is a binding site for L-methionine.

The protein belongs to the AdoMet synthase family. In terms of assembly, homotetramer. Mn(2+) is required as a cofactor. Requires Mg(2+) as cofactor. The cofactor is Co(2+). It depends on K(+) as a cofactor. Mostly expressed in flowers, seedpods and roots, and, to a lower extent, in stems and leaves.

The protein localises to the cytoplasm. The catalysed reaction is L-methionine + ATP + H2O = S-adenosyl-L-methionine + phosphate + diphosphate. The protein operates within amino-acid biosynthesis; S-adenosyl-L-methionine biosynthesis; S-adenosyl-L-methionine from L-methionine: step 1/1. Catalyzes the formation of S-adenosylmethionine from methionine and ATP. The reaction comprises two steps that are both catalyzed by the same enzyme: formation of S-adenosylmethionine (AdoMet) and triphosphate, and subsequent hydrolysis of the triphosphate. The protein is S-adenosylmethionine synthase 4 (MSAMS4) of Brassica juncea (Indian mustard).